Reading from the N-terminus, the 200-residue chain is Dephospho-CoA kinase (200 aa).

In terms of domain architecture, DPCK spans 4 to 200 (TIGLTGSVAT…TFIERFVNNK (197 aa)). Residue 12–17 (ATGKST) coordinates ATP.

Belongs to the CoaE family.

It is found in the cytoplasm. The enzyme catalyses 3'-dephospho-CoA + ATP = ADP + CoA + H(+). Its pathway is cofactor biosynthesis; coenzyme A biosynthesis; CoA from (R)-pantothenate: step 5/5. Catalyzes the phosphorylation of the 3'-hydroxyl group of dephosphocoenzyme A to form coenzyme A. The protein is Dephospho-CoA kinase of Listeria innocua serovar 6a (strain ATCC BAA-680 / CLIP 11262).